The primary structure comprises 68 residues: Neuronal regeneration-related protein (68 aa).

Interacts with FLNA. Interacts with the latency-associated peptides (LAP) of TGFB1 and TGFB2; the interaction results in a decrease in TGFB autoinduction. Post-translationally, phosphorylated on Ser-59. Phosphorylation decreases stability and activity.

It is found in the cytoplasm. Functionally, may have roles in neural function. Ectopic expression promotes axonal regeneration. Also augments motility of gliomas. May also have roles in cellular differentiation. Induces differentiation of fibroblast into myofibroblast and myofibroblast ameboid migration. Increases retinoic-acid regulation of lipid-droplet biogenesis. Down-regulates the expression of TGFB1 and TGFB2 but not of TGFB3. May play a role in the regulation of alveolar generation. The chain is Neuronal regeneration-related protein (Nrep) from Rattus norvegicus (Rat).